Reading from the N-terminus, the 201-residue chain is Small ribosomal subunit protein uS5 (201 aa).

Residues 1–28 are disordered; that stretch reads MAGPQRRGSGAGGGERRDRKGRDGGAGA. The span at 14-23 shows a compositional bias: basic and acidic residues; it reads GERRDRKGRD. One can recognise an S5 DRBM domain in the interval 34–97; the sequence is YVERVVAINR…EEAKKHFFKV (64 aa).

It belongs to the universal ribosomal protein uS5 family. In terms of assembly, part of the 30S ribosomal subunit. Contacts proteins S4 and S8.

With S4 and S12 plays an important role in translational accuracy. In terms of biological role, located at the back of the 30S subunit body where it stabilizes the conformation of the head with respect to the body. This chain is Small ribosomal subunit protein uS5, found in Streptomyces coelicolor (strain ATCC BAA-471 / A3(2) / M145).